A 1348-amino-acid chain; its full sequence is Putative late blight resistance protein homolog R1B-12 (1348 aa).

Coiled-coil stretches lie at residues 446–469 (RYSDSLAFLKNQLQVIQTEFESLQ) and 561–583 (PRMNEEIVGFEDVIENLRKKLLN). An NB-ARC domain is found at 552–848 (RTSSQLTRTP…ISESFIKSCE (297 aa)). Residue 595–602 (GMPGLGKT) participates in ATP binding. LRR repeat units lie at residues 977 to 1001 (FKFLKVLDLEHQFFIDFIPTELLYL), 1051 to 1074 (LRHLHIPYFSTEKEEALLENSAKL), 1123 to 1147 (PITLEILKLYRSSDFKVIPFCISAQ), 1151 to 1170 (YLKLSGFYLNSQYLSETADH), 1171 to 1194 (LKHLEVLKLHNIEFGGHSEWEVSN), 1197 to 1219 (FPQLKILKLEYVSLMKLIVADDA), 1220 to 1244 (FPNLEQLVLHDCEDLMEIPSCFMDI), and 1309 to 1332 (LPGIQSIAVDSNEKKFIVIGDMDA). One can recognise an HMA domain in the interval 1284–1348 (VKKMVLKFDT…VGKLINRGML (65 aa)).

This sequence belongs to the disease resistance NB-LRR family.

It is found in the cytoplasm. The protein resides in the membrane. Its function is as follows. Confers resistance to late blight (Phytophthora infestans) races carrying the avirulence gene Avr1. Resistance proteins guard the plant against pathogens that contain an appropriate avirulence protein via an indirect interaction with this avirulence protein. That triggers a defense system including the hypersensitive response, which restricts the pathogen growth. This Solanum demissum (Wild potato) protein is Putative late blight resistance protein homolog R1B-12 (R1B-12).